A 554-amino-acid polypeptide reads, in one-letter code: Acurin A biosynthesis cluster MFS-type transporter (554 aa).

A run of 5 helical transmembrane segments spans residues 24–44, 60–80, 96–116, 123–143, and 151–171; these read WLIF…TSII, LYIW…AIVG, LLIF…GMLL, GLGG…MVSL, and GILG…GGGF. Asn174 is a glycosylation site (N-linked (GlcNAc...) asparagine). Helical transmembrane passes span 179 to 199, 219 to 239, and 251 to 271; these read WIFY…VTLL, WGGI…LTWA, and IVPL…EALP. An N-linked (GlcNAc...) asparagine glycan is attached at Asn283. 6 consecutive transmembrane segments (helical) span residues 289-309, 324-344, 352-372, 385-405, 417-437, and 496-516; these read LFVM…FLPI, VMLF…GILM, SFQY…TLLD, ILFG…ILAS, TWIF…AAVF, and VWQV…LVKA.

The protein belongs to the major facilitator superfamily.

It localises to the membrane. MFS-type transporter that may have a role in the biosynthesis of acurin A, a highly reduced polyketide coupled to a serine via a peptide bond; either in extra- or intracellular transport. The polypeptide is Acurin A biosynthesis cluster MFS-type transporter (Aspergillus aculeatus (strain ATCC 16872 / CBS 172.66 / WB 5094)).